We begin with the raw amino-acid sequence, 156 residues long: uncharacterized protein (156 aa).

This is an uncharacterized protein from Invertebrate iridescent virus 3 (IIV-3).